The chain runs to 356 residues: Caspase activity and apoptosis inhibitor 1 (356 aa).

Positions 1 to 14 are enriched in basic residues; the sequence is MTGKKSSREKRRKR. Disordered stretches follow at residues 1–24 and 54–80; these read MTGK…ASLA and VAGG…GSLQ. Phosphoserine is present on serine 68. Threonine 69 carries the phosphothreonine modification. A Glycyl lysine isopeptide (Lys-Gly) (interchain with G-Cter in SUMO2) cross-link involves residue lysine 84. 2 positions are modified to phosphoserine: serine 100 and serine 183. A disordered region spans residues 208–234; it reads DSTSSLRENKQPEVLESKQGKGEDSDV. Positions 214 to 231 are enriched in basic and acidic residues; it reads RENKQPEVLESKQGKGED. The stretch at 276–306 forms a coiled coil; sequence ENTVQSEAGQIDDLERDIEKSVNEILGLAES. Residue serine 307 is modified to Phosphoserine.

Anti-apoptotic protein that modulates a caspase-10 dependent mitochondrial caspase-3/9 feedback amplification loop. This Mus musculus (Mouse) protein is Caspase activity and apoptosis inhibitor 1 (Caap1).